The primary structure comprises 198 residues: Large ribosomal subunit protein bL25 (198 aa).

This sequence belongs to the bacterial ribosomal protein bL25 family. CTC subfamily. As to quaternary structure, part of the 50S ribosomal subunit; part of the 5S rRNA/L5/L18/L25 subcomplex. Contacts the 5S rRNA. Binds to the 5S rRNA independently of L5 and L18.

Its function is as follows. This is one of the proteins that binds to the 5S RNA in the ribosome where it forms part of the central protuberance. This is Large ribosomal subunit protein bL25 from Gloeothece citriformis (strain PCC 7424) (Cyanothece sp. (strain PCC 7424)).